We begin with the raw amino-acid sequence, 481 residues long: ATP synthase subunit beta (481 aa).

Residue 160–167 participates in ATP binding; that stretch reads GGAGVGKT.

Belongs to the ATPase alpha/beta chains family. F-type ATPases have 2 components, CF(1) - the catalytic core - and CF(0) - the membrane proton channel. CF(1) has five subunits: alpha(3), beta(3), gamma(1), delta(1), epsilon(1). CF(0) has three main subunits: a(1), b(2) and c(9-12). The alpha and beta chains form an alternating ring which encloses part of the gamma chain. CF(1) is attached to CF(0) by a central stalk formed by the gamma and epsilon chains, while a peripheral stalk is formed by the delta and b chains.

The protein localises to the cell inner membrane. It catalyses the reaction ATP + H2O + 4 H(+)(in) = ADP + phosphate + 5 H(+)(out). Produces ATP from ADP in the presence of a proton gradient across the membrane. The catalytic sites are hosted primarily by the beta subunits. The chain is ATP synthase subunit beta from Stigmatella aurantiaca.